A 166-amino-acid polypeptide reads, in one-letter code: Ribosome maturation factor RimM (166 aa).

A PRC barrel domain is found at 90–165; it reads NDNDAFSIFY…IITLKNIEGL (76 aa).

This sequence belongs to the RimM family. As to quaternary structure, binds ribosomal protein uS19.

The protein resides in the cytoplasm. Its function is as follows. An accessory protein needed during the final step in the assembly of 30S ribosomal subunit, possibly for assembly of the head region. Essential for efficient processing of 16S rRNA. May be needed both before and after RbfA during the maturation of 16S rRNA. It has affinity for free ribosomal 30S subunits but not for 70S ribosomes. The sequence is that of Ribosome maturation factor RimM from Mesoplasma florum (strain ATCC 33453 / NBRC 100688 / NCTC 11704 / L1) (Acholeplasma florum).